We begin with the raw amino-acid sequence, 149 residues long: Sex-regulated protein janus-A (149 aa).

Lys46 contacts substrate. His77 acts as the Proton acceptor in catalysis. 118–120 (STG) provides a ligand contact to substrate.

It belongs to the janus family.

Its function is as follows. JanA and janB regulate somatic sex differentiation. The protein is Sex-regulated protein janus-A (janA) of Drosophila pseudoobscura pseudoobscura (Fruit fly).